A 280-amino-acid polypeptide reads, in one-letter code: Pantothenate synthetase (280 aa).

An ATP-binding site is contributed by M31–H38. H38 (proton donor) is an active-site residue. Q62 contributes to the (R)-pantoate binding site. Q62 is a beta-alanine binding site. Residue G150–D153 coordinates ATP. Residue Q156 participates in (R)-pantoate binding. ATP-binding positions include V179 and M187–R190.

Belongs to the pantothenate synthetase family. Homodimer.

It is found in the cytoplasm. It catalyses the reaction (R)-pantoate + beta-alanine + ATP = (R)-pantothenate + AMP + diphosphate + H(+). The protein operates within cofactor biosynthesis; (R)-pantothenate biosynthesis; (R)-pantothenate from (R)-pantoate and beta-alanine: step 1/1. Functionally, catalyzes the condensation of pantoate with beta-alanine in an ATP-dependent reaction via a pantoyl-adenylate intermediate. The chain is Pantothenate synthetase from Xanthomonas oryzae pv. oryzae (strain MAFF 311018).